The following is a 92-amino-acid chain: Small ribosomal subunit protein uS19 (92 aa).

Belongs to the universal ribosomal protein uS19 family.

Protein S19 forms a complex with S13 that binds strongly to the 16S ribosomal RNA. This Leptospira biflexa serovar Patoc (strain Patoc 1 / Ames) protein is Small ribosomal subunit protein uS19.